The chain runs to 200 residues: Recombination protein RecR (200 aa).

The segment at 57 to 72 (CRQCRTLTEQELCPQC) adopts a C4-type zinc-finger fold. The Toprim domain maps to 80-175 (TQLCVVEGPM…VASRIAHGVP (96 aa)).

This sequence belongs to the RecR family.

Functionally, may play a role in DNA repair. It seems to be involved in an RecBC-independent recombinational process of DNA repair. It may act with RecF and RecO. This Pseudomonas putida (strain W619) protein is Recombination protein RecR.